The chain runs to 445 residues: D-serine transporter DsdX (445 aa).

12 helical membrane passes run 5–25, 29–49, 57–77, 106–126, 140–160, 178–198, 224–244, 265–285, 302–322, 343–363, 385–405, and 425–445; these read IWVV…IVKF, PFLA…MGPL, SGIG…TILG, VLVG…VLLI, LLKL…VVPP, VIVY…PLFL, TLPS…LMLV, IGNP…VLGI, FGSI…NAIL, ILLA…ATVA, IIAI…DSLF, and TATF…SFII.

The protein belongs to the GntP permease family.

Its subcellular location is the cell inner membrane. With respect to regulation, uptake of D-serine is inhibited by carbonyl cyanide m-chlorophenylhydrazone (CCCP), and at high concentrations of D-threonine, stimulated by D-cycloserine and not affected by D-alanine or glycine. Its function is as follows. Protein that allows transport of D-serine across the inner membrane, does not transport D-alanine nor probably glycine. Is probably a H(+) symporter, as CCCP inhibits transport. Transports D-serine more efficiently than CycA. In Escherichia coli O6:H1 (strain CFT073 / ATCC 700928 / UPEC), this protein is D-serine transporter DsdX (dsdX).